The sequence spans 690 residues: Protease 2 (690 aa).

Catalysis depends on charge relay system residues Ser534, Asp619, and His654.

Belongs to the peptidase S9A family.

The catalysed reaction is Hydrolysis of -Arg-|-Xaa- and -Lys-|-Xaa- bonds in oligopeptides, even when P1' residue is proline.. Cleaves peptide bonds on the C-terminal side of lysyl and argininyl residues. In Moraxella lacunata, this protein is Protease 2 (ptrB).